We begin with the raw amino-acid sequence, 430 residues long: Adenylosuccinate synthetase (430 aa).

Residues 12 to 18 (GDEGKGK) and 40 to 42 (GHT) contribute to the GTP site. The active-site Proton acceptor is D13. 2 residues coordinate Mg(2+): D13 and G40. IMP-binding positions include 13 to 16 (DEGK), 38 to 41 (NAGH), T129, R143, Q223, T238, and R302. The active-site Proton donor is the H41. Position 298–304 (298–304 (TTTGRPR)) interacts with substrate. Residues R304, 330 to 332 (KLD), and 412 to 414 (SVG) each bind GTP.

The protein belongs to the adenylosuccinate synthetase family. As to quaternary structure, homodimer. It depends on Mg(2+) as a cofactor.

The protein localises to the cytoplasm. It catalyses the reaction IMP + L-aspartate + GTP = N(6)-(1,2-dicarboxyethyl)-AMP + GDP + phosphate + 2 H(+). It participates in purine metabolism; AMP biosynthesis via de novo pathway; AMP from IMP: step 1/2. Functionally, plays an important role in the de novo pathway of purine nucleotide biosynthesis. Catalyzes the first committed step in the biosynthesis of AMP from IMP. This chain is Adenylosuccinate synthetase, found in Desulforudis audaxviator (strain MP104C).